The primary structure comprises 1040 residues: Alpha-mannosidase 2C1 (1040 aa).

Residues H260, D262, D372, and H577 each coordinate Co(2+). The active-site Nucleophile is D372.

It belongs to the glycosyl hydrolase 38 family. The cofactor is Co(2+).

The protein resides in the cytoplasm. It catalyses the reaction Hydrolysis of terminal, non-reducing alpha-D-mannose residues in alpha-D-mannosides.. Strongly inhibited by swainsonine. Also inhibited to a lesser extent by deoxymannojirimycin (DMM). Cleaves alpha 1,2-, alpha 1,3-, and alpha 1,6-linked mannose residues on cytoplasmic free oligosaccharides generated by N-glycoprotein degradation pathways. In Homo sapiens (Human), this protein is Alpha-mannosidase 2C1 (MAN2C1).